An 831-amino-acid chain; its full sequence is Prickle-like protein 1 (831 aa).

One can recognise a PET domain in the interval 14–122; sequence FGCQRSSTSD…TIKLLSRAMM (109 aa). 3 LIM zinc-binding domains span residues 124 to 189, 189 to 249, and 249 to 313; these read AVCE…LLKP, PRCS…LYAE, and EYCE…EDIH. Positions 314 to 346 are disordered; sequence ASDSSDSAFQSARSRDSRRSVRMGRSSRSADQC. Residues serine 315, serine 591, and serine 594 each carry the phosphoserine modification. Disordered stretches follow at residues 664 to 688 and 763 to 831; these read EERGSRPHHHRHRRSRKSRSDNALN and CSSS…CIIS. Over residues 669-680 the composition is skewed to basic residues; sequence RPHHHRHRRSRK. Serine 683 bears the Phosphoserine mark. Residues 797-812 are compositionally biased toward polar residues; that stretch reads DLSSPASALPTPQFNQ. Positions 815–831 are enriched in basic residues; that stretch reads TKSKKKKGHRGKNCIIS. Residue cysteine 828 is modified to Cysteine methyl ester. Cysteine 828 carries the S-farnesyl cysteine lipid modification. The propeptide at 829-831 is removed in mature form; the sequence is IIS.

The protein belongs to the prickle / espinas / testin family. Interacts with REST.

Its subcellular location is the nucleus membrane. It localises to the cytoplasm. The protein localises to the cytosol. In terms of biological role, involved in the planar cell polarity pathway that controls convergent extension during gastrulation and neural tube closure. Convergent extension is a complex morphogenetic process during which cells elongate, move mediolaterally, and intercalate between neighboring cells, leading to convergence toward the mediolateral axis and extension along the anteroposterior axis. Necessary for nuclear localization of REST. May serve as nuclear receptor. The chain is Prickle-like protein 1 (Prickle1) from Rattus norvegicus (Rat).